The primary structure comprises 268 residues: Norsolorinic acid ketoreductase nor1 (268 aa).

Positions 32, 79, 108, 182, 186, 213, and 215 each coordinate NADP(+). Y182 functions as the Proton donor in the catalytic mechanism. The active-site Lowers pKa of active site Tyr is the K186.

The protein belongs to the short-chain dehydrogenases/reductases (SDR) family.

Its subcellular location is the cytoplasm. It is found in the cytosol. The protein resides in the vacuole. The catalysed reaction is (1'S)-averantin + NADP(+) = norsolorinic acid + NADPH + H(+). The protein operates within mycotoxin biosynthesis. Norsolorinic acid ketoreductase; part of the fragmented gene cluster that mediates the biosynthesis of dothistromin (DOTH), a polyketide toxin very similar in structure to the aflatoxin precursor, versicolorin B. The first step of the pathway is the conversion of acetate to norsolorinic acid (NOR) and requires the fatty acid synthase subunits hexA and hexB, as well as the polyketide synthase pksA. PksA combines a hexanoyl starter unit and 7 malonyl-CoA extender units to synthesize the precursor NOR. The hexanoyl starter unit is provided to the acyl-carrier protein (ACP) domain by the fungal fatty acid synthase hexA/hexB. The second step is the conversion of NOR to averantin (AVN) and requires the norsolorinic acid ketoreductase nor1, which catalyzes the dehydration of norsolorinic acid to form (1'S)-averantin. The cytochrome P450 monooxygenase avnA then catalyzes the hydroxylation of AVN to 5'hydroxyaverantin (HAVN). The next step is performed by adhA that transforms HAVN to averufin (AVF). Averufin might then be converted to hydroxyversicolorone by cypX and avfA. Hydroxyversicolorone is further converted versiconal hemiacetal acetate (VHA) by moxY. VHA is then the substrate for the versiconal hemiacetal acetate esterase est1 to yield versiconal (VAL). Versicolorin B synthase vbsA then converts VAL to versicolorin B (VERB) by closing the bisfuran ring. Then, the activity of the versicolorin B desaturase verB leads to versicolorin A (VERA). DotB, a predicted chloroperoxidase, may perform epoxidation of the A-ring of VERA. Alternatively, a cytochrome P450, such as cypX or avnA could catalyze this step. It is also possible that another, uncharacterized, cytochrome P450 enzyme is responsible for this step. Opening of the epoxide could potentially be achieved by the epoxide hydrolase epoA. However, epoA seems not to be required for DOTH biosynthesis, but other epoxide hydrolases may have the ability to complement this hydrolysis. Alternatively, opening of the epoxide ring could be achieved non-enzymatically. The next step is the deoxygenation of ring A to yield the 5,8-dihydroxyanthraquinone which is most likely catalyzed by the NADPH dehydrogenase encoded by ver1. The last stages of DOTH biosynthesis are proposed to involve hydroxylation of the bisfuran. OrdB and norB might have oxidative roles here. An alternative possibility is that cytochrome P450 monoogenases such as avnA and cypX might perform these steps in addition to previously proposed steps. In Dothistroma septosporum (strain NZE10 / CBS 128990) (Red band needle blight fungus), this protein is Norsolorinic acid ketoreductase nor1.